Consider the following 160-residue polypeptide: Serine-protein kinase RsbW (160 aa).

It belongs to the anti-sigma-factor family.

It catalyses the reaction L-seryl-[protein] + ATP = O-phospho-L-seryl-[protein] + ADP + H(+). The enzyme catalyses L-threonyl-[protein] + ATP = O-phospho-L-threonyl-[protein] + ADP + H(+). Its function is as follows. Negative regulator of sigma-B activity. Phosphorylates and inactivates its specific antagonist protein, RsbV. Upon phosphorylation of RsbV, RsbW is released and binds to sigma-B, thereby blocking its ability to form an RNA polymerase holoenzyme (E-sigma-B). The polypeptide is Serine-protein kinase RsbW (Bacillus thuringiensis (strain Al Hakam)).